The primary structure comprises 165 residues: Transcription elongation factor GreA (165 aa).

Positions 55–78 form a coiled coil; the sequence is AAKEEQGKQELRVRQLTQLLENAK.

It belongs to the GreA/GreB family.

Its function is as follows. Necessary for efficient RNA polymerase transcription elongation past template-encoded arresting sites. The arresting sites in DNA have the property of trapping a certain fraction of elongating RNA polymerases that pass through, resulting in locked ternary complexes. Cleavage of the nascent transcript by cleavage factors such as GreA or GreB allows the resumption of elongation from the new 3'terminus. GreA releases sequences of 2 to 3 nucleotides. In Streptomyces avermitilis (strain ATCC 31267 / DSM 46492 / JCM 5070 / NBRC 14893 / NCIMB 12804 / NRRL 8165 / MA-4680), this protein is Transcription elongation factor GreA.